The primary structure comprises 84 residues: UPF0386 protein Oant_1614 (84 aa).

It belongs to the UPF0386 family.

The sequence is that of UPF0386 protein Oant_1614 from Brucella anthropi (strain ATCC 49188 / DSM 6882 / CCUG 24695 / JCM 21032 / LMG 3331 / NBRC 15819 / NCTC 12168 / Alc 37) (Ochrobactrum anthropi).